Consider the following 486-residue polypeptide: MTCGSYCGGRAFSCASACGPRPGRCCISAAPYRGISCYRGLSGGFGSQSVCGAFRSGSCGRSFGYRSGGICGPSPPCITTVSVNESLLTPLNLEIDPNAQCVKHEEKEQIKCLNSKFAAFIDKVRFLEQQNKLLETKWQFYQNRKCCESNMEPLFEGYIEALRREAECVEADSGRLAAELNHAQESMEGYKKRYEEEVSLRATAENEFVALKKDVDCAYLRKSDLEANAEALTQETDFLRRMYDEETRILHSHISDTSIVVKMDNSRDLNMDCVVAEIKAQYDDIASRSRAEAESWYRTKCEEIKATVIRHGETLRRTREEINELNRMIQRLTAEIENAKCQNTKLEAAVTQSEQQGEAALADARCKLAELEGALQKAKQDMACLLKEYQEVMNSKLGLDVEITTYRRLLEGEEQRLCEGVGSVNVCVSSSRGGVVCGDLCVSGTAPAVNTRVCSAPCSGNVVVGTPNACAPCAGAGACSGGCKKC.

The segment at M1–E106 is head. One can recognise an IF rod domain in the interval E106–L417. The segment at K107–Y141 is coil 1A. A linker 1 region spans residues Q142 to M151. A coil 1B region spans residues E152 to S252. A Glycyl lysine isopeptide (Lys-Gly) (interchain with G-Cter in SUMO1) cross-link involves residue K212. A linker 12 region spans residues H253–L269. The interval N270–E413 is coil 2. The tail stretch occupies residues E414–C486.

The protein belongs to the intermediate filament family. As to quaternary structure, heterotetramer of two type I and two type II keratins.

In Mus musculus (Mouse), this protein is Keratin, type II cuticular Hb6 (Krt86).